The sequence spans 1174 residues: Male determiner protein Mdmd(III) (1174 aa).

Over residues 1-15 (MNATDAESRKPENKP) the composition is skewed to basic and acidic residues. Disordered stretches follow at residues 1–51 (MNAT…SGQR), 80–109 (KDGSNEMLPKEDSINTNHNYTTDSNEHPVE), and 136–259 (KQLS…LRRS). Low complexity predominate over residues 16–35 (SSESSSSGSTSGSSDGEVSS). The span at 36–47 (KTYFKNNKSKVL) shows a compositional bias: polar residues. Basic and acidic residues predominate over residues 80-92 (KDGSNEMLPKEDS). Positions 93–102 (INTNHNYTTD) are enriched in polar residues. A compositionally biased stretch (low complexity) spans 138–153 (LSAYRSRSRSTRLSYS). Basic residues predominate over residues 167–180 (SRYKKSVLRNRRTS). Basic and acidic residues predominate over residues 183 to 200 (HGRDSSTTKRSVSRDKDN). Residues 201–223 (RLRRRIGSSRSHTRSHSRFRRSE) are compositionally biased toward basic residues. Residues 235 to 259 (RSQERRHERRRSMSSDYERIALRRS) show a composition bias toward basic and acidic residues. In terms of domain architecture, MIF4G spans 348-531 (KKYIHGYINK…KVLFQVRRDG (184 aa)). The MI domain maps to 641–757 (ALRRTIYLTL…SWDVLDCIKL (117 aa)). The segment covering 840 to 857 (SAPSSSSSSSLSSELSAP) has biased composition (low complexity). Disordered regions lie at residues 840–1045 (SAPS…SRTK) and 1096–1133 (KDNYGNRQNHEISQRHDSEIKRRREERKKRHHEKNHSR). The segment covering 869–909 (KKKHKGKNKKMTKKKNPSKKKEKTKKFVGKNKIAAKNKTIK) has biased composition (basic residues). Basic and acidic residues predominate over residues 910-924 (RRTDKDNSSSKDNFL). Residues 926–957 (SESSSNESISLDSLSSELFAPSSYSSSESSND) are compositionally biased toward low complexity. A compositionally biased stretch (basic residues) spans 963–1001 (KHKGKNKKMTKKKNPSNKKEKTKKKLSKNKKAPNKNTKK). Over residues 1010–1020 (SSESSISESKS) the composition is skewed to low complexity. Residues 1034–1045 (RKKRVTSKSRTK) are compositionally biased toward basic residues. The segment covering 1103 to 1118 (QNHEISQRHDSEIKRR) has biased composition (basic and acidic residues). Residues 1119–1130 (REERKKRHHEKN) show a composition bias toward basic residues.

This sequence belongs to the CWC22 family. As to quaternary structure, component of the spliceosome C complex.

The protein resides in the nucleus speckle. Male determiner protein (M-factor) that controls male somatic sexual differentiation. Acts as a dominant factor that regulates the mRNA splicing of transformer (tra) and doublesex (dsx) transcripts and promotes expression of male splice forms of tra and dsx. Probably acts as a component of the spliceosome C complex required for mRNA splicing factor and exon-junction complex (EJC) assembly. Hinders eIF4AIII from non-specifically binding RNA and escorts it to the splicing machinery to promote EJC assembly on mature mRNAs. This chain is Male determiner protein Mdmd(III), found in Musca domestica (House fly).